We begin with the raw amino-acid sequence, 70 residues long: Large ribosomal subunit protein uL29 (70 aa).

Belongs to the universal ribosomal protein uL29 family.

In Clostridium botulinum (strain Alaska E43 / Type E3), this protein is Large ribosomal subunit protein uL29.